Here is a 153-residue protein sequence, read N- to C-terminus: uncharacterized protein (153 aa).

An N-terminal signal peptide occupies residues 1–22; sequence MKLLKKGTTVLFVMIMAVMLVA. Cys23 carries N-palmitoyl cysteine lipidation. A lipid anchor (S-diacylglycerol cysteine) is attached at Cys23. Positions 121 to 153 are disordered; sequence LPGMASTGDVSKGISMKESEKMLKSQGFKEVEK. Residues 135 to 153 are compositionally biased toward basic and acidic residues; the sequence is SMKESEKMLKSQGFKEVEK.

To E.coli YehR.

It localises to the cell membrane. This is an uncharacterized protein from Listeria innocua serovar 6a (strain ATCC BAA-680 / CLIP 11262).